Reading from the N-terminus, the 83-residue chain is Defensin-like protein 47 (83 aa).

Residues 1 to 27 (MGSTKTLVTCFLVIILAVSLPNNNVLA) form the signal peptide. 4 cysteine pairs are disulfide-bonded: C40–C81, C44–C68, C53–C79, and C57–C80.

The protein belongs to the DEFL family.

Its subcellular location is the secreted. This chain is Defensin-like protein 47, found in Arabidopsis thaliana (Mouse-ear cress).